A 268-amino-acid polypeptide reads, in one-letter code: Tryptophan synthase alpha chain (268 aa).

Catalysis depends on proton acceptor residues E49 and D60.

This sequence belongs to the TrpA family. Tetramer of two alpha and two beta chains.

The enzyme catalyses (1S,2R)-1-C-(indol-3-yl)glycerol 3-phosphate + L-serine = D-glyceraldehyde 3-phosphate + L-tryptophan + H2O. It functions in the pathway amino-acid biosynthesis; L-tryptophan biosynthesis; L-tryptophan from chorismate: step 5/5. In terms of biological role, the alpha subunit is responsible for the aldol cleavage of indoleglycerol phosphate to indole and glyceraldehyde 3-phosphate. This chain is Tryptophan synthase alpha chain, found in Xylella fastidiosa (strain 9a5c).